The primary structure comprises 821 residues: MVVSKVNKSLLSSVFKSRIRPTGESSIASGNKDIAGTSQAVKDLLSSKNSSSDLEEASLQDRVSKLLHVTTSDKSSLEKNLFLKIPSFTTKIPYDISLRTKELSRERKERRVYKQNGLSRRFAKIFRDSAQKLGTEAMFGAFDRVAKEMSVTEYNAMIGVYLEHAEKSNDLDYALGHIEKAFELLKSMRDRGFLIEERVYGPLLGYLIGMDMVDEFHSFKDVIREASPGSVERLGYYEMLLWIHLGDGEKIEELCSTIDGDNGESLSVLQENYLLALCKKDQKYHLERLLEIVDITKVRSSDLLANIFEYLGRFSLDSVASRFLWELRESDEGVKNVSDLISIYSTCTPNPTVEDTILKFNKMHEELDVMPSSTSYEKLVKYSCDSNEVVTALDVVEKMGEAGLMISADILHSLLHAIDEVLEFDLVRRIHSIMCTKSVKPNTENFRSIIRLCTRIKDFEGAYNMLGNLKNFNLEPNSSMFNCILAGYFREKNVSSALMVVKQMKEAGVKPDSITFGYLINNCTQEDAITKYYEEMKQAGVQATKRIYMSLIDAYAASGKFEKAKQVLVDPDVPAINQNELKSVLISALASRGKWADALHIYEEMRKAECHVDPKSIISLIEYSDSKGELSTLVQLADDLQDDTSWIDGFFRMILFAVRNKKSSDIVDLLKRNKVRLLKKGIPVEAHFDEVFWAIAETEPSKVHLGMDLLRFMKDELGFVPSRKCLDFLLHACVNAKDLEHGLLVWKEYQSAAFPCNVLSFLRMYQVLLAAGDSEGAKALVSKIPKDDKDVQHIIEESQSAFSQAPNKKKPKKKMIVLSTK.

The transit peptide at 1 to 74 (MVVSKVNKSL…KLLHVTTSDK (74 aa)) directs the protein to the mitochondrion. PPR repeat units follow at residues 372 to 406 (SSTSYEKLVKYSCDSNEVVTALDVVEKMGEAGLMI), 407 to 441 (SADILHSLLHAIDEVLEFDLVRRIHSIMCTKSVKP), 442 to 476 (NTENFRSIIRLCTRIKDFEGAYNMLGNLKNFNLEP), 477 to 511 (NSSMFNCILAGYFREKNVSSALMVVKQMKEAGVKP), 512 to 542 (DSITFGYLINNCTQEDAITKYYEEMKQAGVQ), 544 to 574 (TKRIYMSLIDAYAASGKFEKAKQVLVDPDVP), and 578 to 612 (QNELKSVLISALASRGKWADALHIYEEMRKAECHV). Positions 801–821 (AFSQAPNKKKPKKKMIVLSTK) are disordered.

This sequence belongs to the PPR family. P subfamily.

It is found in the mitochondrion. The sequence is that of Pentatricopeptide repeat-containing protein At4g04790, mitochondrial from Arabidopsis thaliana (Mouse-ear cress).